A 127-amino-acid chain; its full sequence is Ribosome-binding factor A (127 aa).

The protein belongs to the RbfA family. As to quaternary structure, monomer. Binds 30S ribosomal subunits, but not 50S ribosomal subunits or 70S ribosomes.

It is found in the cytoplasm. In terms of biological role, one of several proteins that assist in the late maturation steps of the functional core of the 30S ribosomal subunit. Associates with free 30S ribosomal subunits (but not with 30S subunits that are part of 70S ribosomes or polysomes). Required for efficient processing of 16S rRNA. May interact with the 5'-terminal helix region of 16S rRNA. This chain is Ribosome-binding factor A, found in Nitrosococcus oceani (strain ATCC 19707 / BCRC 17464 / JCM 30415 / NCIMB 11848 / C-107).